The following is a 698-amino-acid chain: Probable metal-nicotianamine transporter YSL17 (698 aa).

The interval 1-36 is disordered; sequence MAEEARGGQRVVVDDDREDASSVASSTERAFEGEPL. 14 helical membrane-spanning segments follow: residues 43 to 63, 67 to 87, 114 to 134, 157 to 177, 216 to 236, 277 to 297, 322 to 342, 395 to 415, 424 to 444, 463 to 483, 511 to 531, 567 to 587, 607 to 627, and 644 to 664; these read VTAR…VVAM, LTSG…FFLA, IAVV…YILG, IGRV…IIVP, VVTL…QWFF, MITA…WPYI, VFVG…SALV, WVAV…VPLL, VAAA…GVGV, SWVG…GIIV, VGQV…FWVF, LPDH…ALSA, IGVA…AVGC, and LLLP…SLAS.

This sequence belongs to the YSL (TC 2.A.67.2) family. In terms of tissue distribution, expressed at low levels in roots.

It localises to the membrane. May be involved in the transport of nicotianamine-chelated metals. The chain is Probable metal-nicotianamine transporter YSL17 (YSL17) from Oryza sativa subsp. japonica (Rice).